The sequence spans 2809 residues: Fibrillin-3 (2809 aa).

An N-terminal signal peptide occupies residues 1 to 31 (MTLEGLYLARGPLARLLLAWSALLCMAGGQG). The propeptide occupies 32-48 (RWDGALEAAGPGRVRRR). The EGF-like 1 domain occupies 147-179 (GQPICDRGCHNGGRCIGPNRCACVYGFMGPQCE). 3 cysteine pairs are disulfide-bonded: C151-C161, C155-C167, and C169-C178. Residues 185-237 (GPCFGQVGPEGCQHQLTGLVCTKALCCATVGRAWGLPCELCPAQPHPCRRGFI) enclose the TB 1 domain. One can recognise an EGF-like 2; calcium-binding domain in the interval 247–288 (DVDECQAVPGLCQGGSCVNMVGSFHCRCPVGHRLSDSSAACE). 3 cysteine pairs are disulfide-bonded: C251/C263, C258/C272, and C274/C287. Residues 293–346 (GACFSVLFGGRCAGDLAGHYTRRQCCCDRGRCWAAGPVPELCPPRGSNEFQQLC) form the TB 2 domain. An N-linked (GlcNAc...) asparagine glycan is attached at N406. The region spanning 408–448 (TIDICRHFTNLCLNGRCLPTPSSYRCECNVGYTQDVRGECI) is the EGF-like 3 domain. Cystine bridges form between C412–C424, C419–C433, C435–C447, C453–C463, C458–C472, C474–C487, C493–C505, C500–C514, C516–C529, C535–C546, C541–C555, C557–C570, C576–C587, C582–C596, and C598–C611. Positions 449 to 488 (DVDECTSSPCHHGDCVNIPGTYHCRCYPGFQATPTRQACV) constitute an EGF-like 4; calcium-binding domain. The 42-residue stretch at 489–530 (DVDECIVSGGLCHLGRCVNTEGSFQCVCNAGFELSPDGKNCV) folds into the EGF-like 5; calcium-binding domain. Residues 531-571 (DHNECATSTMCVNGVCLNEDGSFSCLCKPGFLLAPGGHYCM) form the EGF-like 6; calcium-binding domain. The EGF-like 7; calcium-binding domain maps to 572-612 (DIDECQTPGICVNGHCTNTEGSFRCQCLGGLAVGTDGRVCV). Residues 618-670 (STCYGAIEKGSCARPFPGTVTKSECCCANPDHGFGEPCQLCPAKDSAEFQALC) form the TB 3 domain. The EGF-like 8; calcium-binding domain occupies 682–723 (DINECALDPEVCANGVCENLRGSYRCVCNLGYEAGASGKDCT). Intrachain disulfides connect C686-C698, C693-C707, C709-C722, C728-C740, C735-C749, C751-C764, C770-C780, C775-C789, and C791-C804. In terms of domain architecture, EGF-like 9; calcium-binding spans 724–765 (DVDECALNSLLCDNGWCQNSPGSYSCSCPPGFHFWQDTEICK). The 40-residue stretch at 766–805 (DVDECLSSPCVSGVCRNLAGSYTCKCGPGSRLDPSGTFCL) folds into the EGF-like 10; calcium-binding domain. Residues 810–861 (GTCWLKIQESRCEVNLQGASLRSECCATLGAAWGSPCERCEIDPACARGFAR) enclose the TB 4 domain. Residues 869–910 (DVNECESFPGVCPNGRCVNTAGSFRCECPEGLMLDASGRLCV) form the EGF-like 11; calcium-binding domain. 3 cysteine pairs are disulfide-bonded: C873-C885, C880-C894, and C896-C909. The region spanning 915-966 (EPCFLRWDEDECGVTLPGKYRMDVCCCSIGAVWGVECEACPDPESLEFASLC) is the TB 5 domain. One can recognise an EGF-like 12; calcium-binding domain in the interval 986 to 1027 (DVNECKVFPGLCTHGTCRNTVGSFHCACAGGFALDAQERNCT). Intrachain disulfides connect C990/C1002, C997/C1011, C1013/C1026, C1032/C1044, C1039/C1053, C1055/C1069, C1075/C1087, C1082/C1096, C1098/C1111, C1117/C1129, C1124/C1138, C1140/C1153, C1159/C1170, C1166/C1179, C1181/C1194, C1200/C1212, C1207/C1221, C1223/C1236, C1242/C1254, C1249/C1263, C1265/C1278, C1284/C1297, C1291/C1306, C1308/C1319, C1325/C1338, C1332/C1347, C1349/C1360, C1366/C1378, C1373/C1387, C1389/C1402, C1408/C1419, C1414/C1428, C1430/C1443, C1449/C1460, C1455/C1469, and C1471/C1484. N1025 carries N-linked (GlcNAc...) asparagine glycosylation. In terms of domain architecture, EGF-like 13; calcium-binding spans 1028–1070 (DIDECRISPDLCGQGTCVNTPGSFECECFPGYESGFMLMKNCM). Residues 1071–1112 (DVDECARDPLLCRGGTCTNTDGSYKCQCPPGHELTAKGTACE) enclose the EGF-like 14; calcium-binding domain. Positions 1113 to 1154 (DIDECSLSDGLCPHGQCVNVIGAFQCSCHAGFQSTPDRQGCV) constitute an EGF-like 15; calcium-binding domain. The EGF-like 16; calcium-binding domain maps to 1155-1195 (DINECRVQNGGCDVHCINTEGSYRCSCGQGYSLMPDGRACA). The region spanning 1196 to 1237 (DVDECEENPRVCDQGHCTNMPGGHRCLCYDGFMATPDMRTCV) is the EGF-like 17 domain. The EGF-like 18; calcium-binding domain occupies 1238 to 1279 (DVDECDLNPHICLHGDCENTKGSFVCHCQLGYMVRKGATGCS). The EGF-like 19; calcium-binding domain occupies 1280 to 1320 (DVDECEVGGHNCDSHASCLNIPGSFSCRCLPGWVGDGFECH). An EGF-like 20; calcium-binding domain is found at 1321–1361 (DLDECVSQEHRCSPRGDCLNVPGSYRCTCRQGFAGDGFFCE). One can recognise an EGF-like 21; calcium-binding domain in the interval 1362–1403 (DRDECAENVDLCDNGQCLNAPGGYRCECEMGFDPTEDHRACQ). The EGF-like 22; calcium-binding domain maps to 1404-1444 (DVDECAQGNLCAFGSCENLPGMFRCICNGGYELDRGGGNCT). An N-linked (GlcNAc...) asparagine glycan is attached at N1442. The 41-residue stretch at 1445 to 1485 (DINECADPVNCINGVCINTPGSYLCSCPQDFELNPSGVGCV) folds into the EGF-like 23; calcium-binding domain. The 57-residue stretch at 1490–1546 (GNCFLETHDRGDSGISCSAEIGVGVTRASCCCSLGRAWGNPCELCPMANTTEYRTLC) folds into the TB 6 domain. N1538 carries an N-linked (GlcNAc...) asparagine glycan. Residues 1563 to 1604 (DIDECQELPGLCQGGDCVNTFGSFQCECPPGYHLSEHTRICE) enclose the EGF-like 24; calcium-binding domain. 6 disulfides stabilise this stretch: C1567–C1579, C1574–C1588, C1590–C1603, C1609–C1621, C1616–C1630, and C1632–C1645. Positions 1605 to 1646 (DIDECSTHSGICGPGTCYNTLGNYTCVCPAEYLQVNGGNNCM) constitute an EGF-like 25; calcium-binding domain. A glycan (N-linked (GlcNAc...) asparagine) is linked at N1627. One can recognise a TB 7 domain in the interval 1651 to 1703 (SVCFRHYNGTCQNELAFNVTRKMCCCSYNIGQAWNRPCEACPTPISPDYQILC). N-linked (GlcNAc...) asparagine glycosylation is found at N1658 and N1668. In terms of domain architecture, EGF-like 26; calcium-binding spans 1721 to 1762 (DIDECGEIPAICANGICINQIGSFRCECPAGFNYNSILLACE). Cystine bridges form between C1725/C1737, C1732/C1746, C1748/C1761, C1767/C1780, C1774/C1789, C1791/C1803, C1809/C1821, C1816/C1830, C1832/C1845, C1851/C1861, C1856/C1870, C1872/C1884, C1890/C1903, C1898/C1912, C1914/C1927, C1933/C1945, C1940/C1954, C1956/C1967, C1973/C1985, C1980/C1994, and C1996/C2009. An EGF-like 27; calcium-binding domain is found at 1763–1804 (DVDECGSRESPCQQNADCINIPGSYRCKCTRGYKLSPGGACV). Positions 1805-1846 (GRNECREIPNVCSHGDCMDTEGSYMCLCHRGFQASADQTLCM) constitute an EGF-like 28 domain. The region spanning 1847-1885 (DIDECDRQPCGNGTCKNIIGSYNCLCFPGFVVTHNGDCV) is the EGF-like 29; calcium-binding domain. N-linked (GlcNAc...) asparagine glycosylation occurs at N1858. Positions 1886–1928 (DFDECTTLVGQVCRFGHCLNTAGSFHCLCQDGFELTADGKNCV) constitute an EGF-like 30; calcium-binding domain. One can recognise an EGF-like 31; calcium-binding domain in the interval 1929–1968 (DTNECLSLAGTCLPGTCQNLEGSFRCICPPGFQVQSDHCI). The 42-residue stretch at 1969 to 2010 (DIDECSEEPNLCLFGTCTNSPGSFQCLCPPGFVLSDNGHRCF) folds into the EGF-like 32; calcium-binding domain. Residues 2015 to 2068 (SFCFTRFEAGKCSVPKAFNTTKTRCCCSKRPGEGWGDPCELCPQEGSAAFQELC) enclose the TB 8 domain. N2033 carries an N-linked (GlcNAc...) asparagine glycan. One can recognise an EGF-like 33; calcium-binding domain in the interval 2084 to 2125 (DVNECAENPGVCTNGVCVNTDGSFRCECPFGYSLDFTGINCV). Intrachain disulfides connect C2088–C2100, C2095–C2109, C2111–C2124, C2130–C2141, C2136–C2150, C2152–C2164, C2170–C2181, C2177–C2190, C2192–C2205, C2211–C2225, C2218–C2234, C2236–C2250, C2256–C2268, C2263–C2277, and C2279–C2292. An EGF-like 34; calcium-binding domain is found at 2126-2165 (DTDECSVGHPCGQGTCTNVIGGFECACADGFEPGLMMTCE). Positions 2166–2206 (DIDECSLNPLLCAFRCHNTEGSYLCTCPAGYTLREDGAMCR) constitute an EGF-like 35; calcium-binding domain. In terms of domain architecture, EGF-like 36; calcium-binding spans 2207-2251 (DVDECADGQQDCHARGMECKNLIGTFACVCPPGMRPLPGSGEGCT). The EGF-like 37; calcium-binding domain maps to 2252-2293 (DDNECHAQPDLCVNGRCVNTAGSFRCDCDEGFQPSPTLTECH). One can recognise a TB 9 domain in the interval 2298 to 2351 (GPCFAEVLQTMCRSLSSSSEAVTRAECCCGGGRGWGPRCELCPLPGTSAYRKLC). In terms of domain architecture, EGF-like 38; calcium-binding spans 2363–2404 (DVDECRMLAHLCAHGECINSLGSFRCHCQAGYTPDATATTCL). 21 disulfide bridges follow: C2367/C2379, C2374/C2388, C2390/C2403, C2409/C2420, C2416/C2429, C2431/C2444, C2450/C2461, C2457/C2470, C2472/C2483, C2489/C2502, C2496/C2511, C2513/C2526, C2532/C2542, C2538/C2551, C2553/C2566, C2572/C2584, C2579/C2593, C2595/C2608, C2614/C2625, C2621/C2634, and C2636/C2648. The 41-residue stretch at 2405–2445 (DMDECSQVPKPCTFLCKNTKGSFLCSCPRGYLLEEDGRTCK) folds into the EGF-like 39; calcium-binding domain. Residues 2446–2484 (DLDECTSRQHNCQFLCVNTVGAFTCRCPPGFTQHHQACF) enclose the EGF-like 40; calcium-binding domain. Residues 2485–2527 (DNDECSAQPGPCGAHGHCHNTPGSFRCECHQGFTLVSSGHGCE) form the EGF-like 41; calcium-binding domain. One can recognise an EGF-like 42; calcium-binding domain in the interval 2528–2567 (DVNECDGPHRCQHGCQNQLGGYRCSCPQGFTQHSQWAQCV). Positions 2568-2609 (DENECALSPPTCGSASCRNTLGGFRCVCPSGFDFDQALGGCQ) constitute an EGF-like 43; calcium-binding domain. The 40-residue stretch at 2610–2649 (EVDECAGRRGPCSYSCANTPGGFLCGCPQGYFRAGQGHCV) folds into the EGF-like 44; calcium-binding domain. The N-linked (GlcNAc...) asparagine glycan is linked to N2713.

It belongs to the fibrillin family. In terms of processing, probably forms intermolecular disulfide bonds either with other FBN3 molecules or with other components of the microfibrils. As to expression, predominantly expressed in connective tissues such as skeletal muscle, tendon, skin, perichondrium and periosteum. Highly expressed in fetal lung, brain, kidney. Expressed at low level in prostate, testis, mammary gland, uterus, ovary, placenta, bladder, adrenal gland, thyroid, fetal thymus, fetal liver, liver, fetal heart and heart.

The protein resides in the secreted. It localises to the extracellular space. Its subcellular location is the extracellular matrix. In terms of biological role, fibrillins are structural components of 10-12 nm extracellular calcium-binding microfibrils, which occur either in association with elastin or in elastin-free bundles. Fibrillin-containing microfibrils provide long-term force bearing structural support. This is Fibrillin-3 (FBN3) from Homo sapiens (Human).